A 404-amino-acid polypeptide reads, in one-letter code: MKLPIYLDYAATTPVDPRVAEKMFQYMTMDGIFGNPASRSHRYGWQAEEAVDIARNQVADLINADHREIVFTSGATESNNLAIKGVAHFYNKKGKHIITSKTEHKAVLDTCRQLEREGFEVTYLEPASNGIIPMERLEAAMRDDTILVSIMHVNNEIGVIHDIDAIGELCRSKGIIFHMDAAQSAGKLPIDVQATKVDLISISGHKMYGPKGIGALYVRRKPRIRLEAQMHGGGHERGMRSGTLPTHQIVGLGEAAAIAKAEMATDNERIGRLRDKLWNGIKHIEETYINGDLTQRFCGSLNVSFNYVEGESLMMALKDLAVSSGSACTSASLEPSYVLRALGLNDEMAHSSIRFSIGRFTTEEEIDHAIETITQSIDKLREMSPLWEMFKDGIDLNQVQWAHH.

Residues 75–76 (AT), Asn155, Gln183, and 203–205 (SGH) contribute to the pyridoxal 5'-phosphate site. An N6-(pyridoxal phosphate)lysine modification is found at Lys206. Thr243 contributes to the pyridoxal 5'-phosphate binding site. The active-site Cysteine persulfide intermediate is the Cys328. Cys328 serves as a coordination point for [2Fe-2S] cluster.

This sequence belongs to the class-V pyridoxal-phosphate-dependent aminotransferase family. NifS/IscS subfamily. Homodimer. Forms a heterotetramer with IscU, interacts with other sulfur acceptors. The cofactor is pyridoxal 5'-phosphate.

It localises to the cytoplasm. It catalyses the reaction (sulfur carrier)-H + L-cysteine = (sulfur carrier)-SH + L-alanine. The protein operates within cofactor biosynthesis; iron-sulfur cluster biosynthesis. Master enzyme that delivers sulfur to a number of partners involved in Fe-S cluster assembly, tRNA modification or cofactor biosynthesis. Catalyzes the removal of elemental sulfur atoms from cysteine to produce alanine. Functions as a sulfur delivery protein for Fe-S cluster synthesis onto IscU, an Fe-S scaffold assembly protein, as well as other S acceptor proteins. The protein is Cysteine desulfurase IscS of Shewanella putrefaciens (strain CN-32 / ATCC BAA-453).